A 1058-amino-acid chain; its full sequence is Carbamoyl phosphate synthase large chain (1058 aa).

The interval 1 to 401 (MPKRKDIQKI…SLLKACRSLE (401 aa)) is carboxyphosphate synthetic domain. ATP-binding residues include Arg129, Arg169, Gly175, Gly176, Arg208, Ile210, Glu215, Gly241, Ile242, His243, Gln284, and Glu298. Residues 133 to 327 (KQLMQELDQP…IAKLAAKIAV (195 aa)) form the ATP-grasp 1 domain. Residues Gln284, Glu298, and Asn300 each contribute to the Mg(2+) site. Residues Gln284, Glu298, and Asn300 each coordinate Mn(2+). The tract at residues 402–546 (IGVCHNEMTS…YSTYELENES (145 aa)) is oligomerization domain. A carbamoyl phosphate synthetic domain region spans residues 547 to 929 (VQSNKESILV…ALYKAFEANN (383 aa)). In terms of domain architecture, ATP-grasp 2 spans 671 to 861 (EKALKELGIP…MAQIATKLIL (191 aa)). ATP-binding residues include Arg707, Ser746, Ile748, Glu752, Gly777, Val778, His779, Ser780, Gln820, and Glu832. Mg(2+) contacts are provided by Gln820, Glu832, and Asn834. Mn(2+) is bound by residues Gln820, Glu832, and Asn834. The MGS-like domain maps to 930-1058 (SHLSEFGQIV…ESRCFNIEAI (129 aa)). The segment at 930–1058 (SHLSEFGQIV…ESRCFNIEAI (129 aa)) is allosteric domain.

The protein belongs to the CarB family. As to quaternary structure, composed of two chains; the small (or glutamine) chain promotes the hydrolysis of glutamine to ammonia, which is used by the large (or ammonia) chain to synthesize carbamoyl phosphate. Tetramer of heterodimers (alpha,beta)4. It depends on Mg(2+) as a cofactor. Requires Mn(2+) as cofactor.

The enzyme catalyses hydrogencarbonate + L-glutamine + 2 ATP + H2O = carbamoyl phosphate + L-glutamate + 2 ADP + phosphate + 2 H(+). It catalyses the reaction hydrogencarbonate + NH4(+) + 2 ATP = carbamoyl phosphate + 2 ADP + phosphate + 2 H(+). The protein operates within amino-acid biosynthesis; L-arginine biosynthesis; carbamoyl phosphate from bicarbonate: step 1/1. Its pathway is pyrimidine metabolism; UMP biosynthesis via de novo pathway; (S)-dihydroorotate from bicarbonate: step 1/3. Functionally, large subunit of the glutamine-dependent carbamoyl phosphate synthetase (CPSase). CPSase catalyzes the formation of carbamoyl phosphate from the ammonia moiety of glutamine, carbonate, and phosphate donated by ATP, constituting the first step of 2 biosynthetic pathways, one leading to arginine and/or urea and the other to pyrimidine nucleotides. The large subunit (synthetase) binds the substrates ammonia (free or transferred from glutamine from the small subunit), hydrogencarbonate and ATP and carries out an ATP-coupled ligase reaction, activating hydrogencarbonate by forming carboxy phosphate which reacts with ammonia to form carbamoyl phosphate. This is Carbamoyl phosphate synthase large chain from Streptococcus pyogenes serotype M6 (strain ATCC BAA-946 / MGAS10394).